The primary structure comprises 437 residues: GTPase Der (437 aa).

EngA-type G domains follow at residues 3–168 and 178–353; these read PLIA…PVQE and TNLA…ENRS. GTP is bound by residues 9-16, 56-60, 120-123, 184-191, 231-235, and 296-299; these read GRPNVGKS, DTGGY, NKVE, DTAGL, and NKWD. The region spanning 354–437 is the KH-like domain; sequence RKITTSALNR…VTVSLRFFKK (84 aa).

It belongs to the TRAFAC class TrmE-Era-EngA-EngB-Septin-like GTPase superfamily. EngA (Der) GTPase family. As to quaternary structure, associates with the 50S ribosomal subunit.

In terms of biological role, GTPase that plays an essential role in the late steps of ribosome biogenesis. This is GTPase Der from Chlorobium phaeobacteroides (strain DSM 266 / SMG 266 / 2430).